The chain runs to 79 residues: Conotoxin ArMSGL-0122 (79 aa).

The N-terminal stretch at 1 to 20 (MSRLGIMVLTLLLLVFIVTS) is a signal peptide. A propeptide spanning residues 21-44 (HQDAGEKQATQRAAINFRWKRSLT) is cleaved from the precursor. 3 cysteine pairs are disulfide-bonded: Cys52–Cys64, Cys56–Cys73, and Cys63–Cys77. Leu78 carries the post-translational modification Leucine amide.

Belongs to the conotoxin O3 superfamily. Expressed by the venom duct.

The protein localises to the secreted. The protein is Conotoxin ArMSGL-0122 of Conus arenatus (Sand-dusted cone).